The following is a 417-amino-acid chain: Tryptophan synthase beta chain (417 aa).

Lysine 99 bears the N6-(pyridoxal phosphate)lysine mark.

It belongs to the TrpB family. As to quaternary structure, tetramer of two alpha and two beta chains. Pyridoxal 5'-phosphate serves as cofactor.

It catalyses the reaction (1S,2R)-1-C-(indol-3-yl)glycerol 3-phosphate + L-serine = D-glyceraldehyde 3-phosphate + L-tryptophan + H2O. It functions in the pathway amino-acid biosynthesis; L-tryptophan biosynthesis; L-tryptophan from chorismate: step 5/5. Functionally, the beta subunit is responsible for the synthesis of L-tryptophan from indole and L-serine. In Corynebacterium glutamicum (strain R), this protein is Tryptophan synthase beta chain.